The following is a 371-amino-acid chain: Galanin receptor type 2 (371 aa).

The Extracellular portion of the chain corresponds to 1-27; it reads MNGSDSQGAEDSSQEGGGGWQPEAVLV. A glycan (N-linked (GlcNAc...) asparagine) is linked at N2. Residues 28-48 traverse the membrane as a helical segment; it reads PLFFALIFLVGAVGNALVLAV. Residues 49–59 are Cytoplasmic-facing; that stretch reads LLRGGQAVSTT. The chain crosses the membrane as a helical span at residues 60 to 80; that stretch reads NLFILNLGVADLCFILCCVPF. The Extracellular segment spans residues 81 to 98; that stretch reads QATIYTLDDWVFGSLLCK. A disulfide bond links C97 and C174. The chain crosses the membrane as a helical span at residues 99-120; sequence AVHFLIFLTMHASSFTLAAVSL. Residues 121-140 lie on the Cytoplasmic side of the membrane; that stretch reads DRYLAIRYPLHSRELRTPRN. The helical transmembrane segment at 141 to 161 threads the bilayer; it reads ALAAIGLIWGLALLFSGPYLS. Residues 162 to 186 are Extracellular-facing; it reads YYSQSQLANLTVCHPAWSAPRRRAM. Residues 187–207 traverse the membrane as a helical segment; it reads DLCTFVFSYLLPVLVLSLTYA. Residues 208–236 are Cytoplasmic-facing; it reads RTLHYLWRTVDPVAAGSGSQRAKRKVTRM. The chain crosses the membrane as a helical span at residues 237-257; it reads IVIVAVLFCLCWMPHHALILC. The Extracellular portion of the chain corresponds to 258-259; sequence VW. Residues 260 to 280 traverse the membrane as a helical segment; sequence FGRFPLTRATYALRILSHLVS. Residues 281–371 are Cytoplasmic-facing; that stretch reads YANSCVNPIV…TLSRTLDPAC (91 aa).

The protein belongs to the G-protein coupled receptor 1 family.

It is found in the cell membrane. Functionally, receptor for the hormone galanin, GALP and spexin-1. The activity of this receptor is mediated by G proteins that activate the phospholipase C/protein kinase C pathway (via G(q)) and that inhibit adenylyl cyclase (via G(i)). This chain is Galanin receptor type 2 (Galr2), found in Mus musculus (Mouse).